The sequence spans 251 residues: Electron transfer flavoprotein subunit beta, mitochondrial (251 aa).

It belongs to the ETF beta-subunit/FixA family. Heterodimer of an alpha and a beta subunit. Requires FAD as cofactor. AMP is required as a cofactor.

Its subcellular location is the mitochondrion matrix. In terms of biological role, the electron transfer flavoprotein serves as a specific electron acceptor for several dehydrogenases, including five acyl-CoA dehydrogenases, glutaryl-CoA and sarcosine dehydrogenase. It transfers the electrons to the main mitochondrial respiratory chain via ETF-ubiquinone oxidoreductase (ETF dehydrogenase). Involved in leucine catabolism and in phytol degradation. In Arabidopsis thaliana (Mouse-ear cress), this protein is Electron transfer flavoprotein subunit beta, mitochondrial (ETFB).